Here is a 1320-residue protein sequence, read N- to C-terminus: Mediator of RNA polymerase II transcription subunit 15 (1320 aa).

A compositionally biased stretch (polar residues) spans 235-244; that stretch reads QQASLNQLTP. Disordered stretches follow at residues 235 to 283, 372 to 398, 540 to 688, 702 to 791, and 1233 to 1270; these read QQAS…KPQQ, KNMM…PQQA, QLQQ…QQQT, QTQQ…PTEQ, and DSSS…DSKK. 3 stretches are compositionally biased toward low complexity: residues 245 to 283, 375 to 398, and 540 to 554; these read QQRA…KPQQ, MAQQ…PQQA, and QLQQ…HTQL. The span at 555 to 587 shows a compositional bias: polar residues; sequence ADSFSQRQFTSPTLAKPSANVSTIAQQQTQPTA. 3 stretches are compositionally biased toward low complexity: residues 588-624, 634-688, and 702-780; these read LSQS…QQQQ, QQQT…QQQT, and QTQQ…PQQT.

Belongs to the Mediator complex subunit 15 family. As to quaternary structure, component of the Mediator complex.

The protein localises to the nucleus. Functionally, component of the Mediator complex, a coactivator involved in regulated gene transcription of nearly all RNA polymerase II-dependent genes. Mediator functions as a bridge to convey information from gene-specific regulatory proteins to the basal RNA polymerase II transcription machinery. Mediator is recruited to promoters by direct interactions with regulatory proteins and serves as a scaffold for the assembly of a functional preinitiation complex with RNA polymerase II and the general transcription factors. This Eremothecium gossypii (strain ATCC 10895 / CBS 109.51 / FGSC 9923 / NRRL Y-1056) (Yeast) protein is Mediator of RNA polymerase II transcription subunit 15 (GAL11).